The primary structure comprises 189 residues: MIDLITQLIRPDIRALSAYHVPDPAGLIKLDAMENPYGWPDTLKAEWLEGMHDLALNRYPDPQGTAVQAALRQAMGIPSDMGLLLGNGSDELIQMLAIAVAQPGRKVLSLDPGFVMYRMIACFAGMDYVGVPLRSDDFSIDLPVMLDAIEREQPALIYLAYPNNPTGNRFDSDDMVRIIEAAPGLVIVD.

The protein belongs to the class-II pyridoxal-phosphate-dependent aminotransferase family. Histidinol-phosphate aminotransferase subfamily. In terms of assembly, homodimer. The cofactor is pyridoxal 5'-phosphate.

It catalyses the reaction L-histidinol phosphate + 2-oxoglutarate = 3-(imidazol-4-yl)-2-oxopropyl phosphate + L-glutamate. It participates in amino-acid biosynthesis; L-histidine biosynthesis; L-histidine from 5-phospho-alpha-D-ribose 1-diphosphate: step 7/9. The sequence is that of Histidinol-phosphate aminotransferase (hisC) from Thiocapsa roseopersicina.